Reading from the N-terminus, the 325-residue chain is Probable serine/threonine-protein phosphatase 2A activator 1 (325 aa).

It belongs to the PTPA-type PPIase family.

The protein resides in the cytoplasm. It catalyses the reaction [protein]-peptidylproline (omega=180) = [protein]-peptidylproline (omega=0). In terms of biological role, PPIases accelerate the folding of proteins. It catalyzes the cis-trans isomerization of proline imidic peptide bonds in oligopeptides. Acts as a regulatory subunit for PP2A-like phosphatases modulating their activity or substrate specificity, probably by inducing a conformational change in the catalytic subunit, a direct target of the PPIase. The polypeptide is Probable serine/threonine-protein phosphatase 2A activator 1 (ppp2r4A) (Dictyostelium discoideum (Social amoeba)).